The following is a 430-amino-acid chain: Phosphomethylpyrimidine synthase (430 aa).

Substrate is bound by residues Asn-67, Met-96, Tyr-125, His-161, 183–185, 224–227, and Glu-263; these read SRG and DALR. Residue His-267 participates in Zn(2+) binding. Residue Tyr-290 participates in substrate binding. His-331 provides a ligand contact to Zn(2+). Cys-406, Cys-409, and Cys-413 together coordinate [4Fe-4S] cluster.

This sequence belongs to the ThiC family. Homodimer. [4Fe-4S] cluster is required as a cofactor.

The catalysed reaction is 5-amino-1-(5-phospho-beta-D-ribosyl)imidazole + S-adenosyl-L-methionine = 4-amino-2-methyl-5-(phosphooxymethyl)pyrimidine + CO + 5'-deoxyadenosine + formate + L-methionine + 3 H(+). It participates in cofactor biosynthesis; thiamine diphosphate biosynthesis. Its function is as follows. Catalyzes the synthesis of the hydroxymethylpyrimidine phosphate (HMP-P) moiety of thiamine from aminoimidazole ribotide (AIR) in a radical S-adenosyl-L-methionine (SAM)-dependent reaction. The protein is Phosphomethylpyrimidine synthase of Campylobacter jejuni subsp. jejuni serotype O:23/36 (strain 81-176).